Reading from the N-terminus, the 331-residue chain is Tyrosine--tRNA ligase (331 aa).

L-tyrosine is bound by residues Tyr-31, Tyr-155, Gln-159, Asp-162, and Gln-177. Positions 218-222 match the 'KMSKS' region motif; sequence KMSKS. Lys-221 is a binding site for ATP.

Belongs to the class-I aminoacyl-tRNA synthetase family. TyrS type 4 subfamily. As to quaternary structure, homodimer.

The protein resides in the cytoplasm. The enzyme catalyses tRNA(Tyr) + L-tyrosine + ATP = L-tyrosyl-tRNA(Tyr) + AMP + diphosphate + H(+). Catalyzes the attachment of tyrosine to tRNA(Tyr) in a two-step reaction: tyrosine is first activated by ATP to form Tyr-AMP and then transferred to the acceptor end of tRNA(Tyr). The protein is Tyrosine--tRNA ligase of Thermoplasma volcanium (strain ATCC 51530 / DSM 4299 / JCM 9571 / NBRC 15438 / GSS1).